We begin with the raw amino-acid sequence, 227 residues long: PKHD-type hydroxylase Mnod_1077 (227 aa).

One can recognise a Fe2OG dioxygenase domain in the interval 78 to 178 (RVLPPLFNRY…RWSAFFWSQS (101 aa)). Fe cation contacts are provided by His-96, Asp-98, and His-159. Arg-169 serves as a coordination point for 2-oxoglutarate.

Fe(2+) serves as cofactor. It depends on L-ascorbate as a cofactor.

In Methylobacterium nodulans (strain LMG 21967 / CNCM I-2342 / ORS 2060), this protein is PKHD-type hydroxylase Mnod_1077.